Reading from the N-terminus, the 62-residue chain is uncharacterized protein (62 aa).

The stretch at 28 to 61 (KIESTHPEIAKKLKEAAEKYREVEEILKKAVDMV) forms a coiled coil.

This is an uncharacterized protein from Archaeoglobus fulgidus (strain ATCC 49558 / DSM 4304 / JCM 9628 / NBRC 100126 / VC-16).